The sequence spans 197 residues: MKLYSVSILRFDPKPVQLLCTASDLSSFSFFQRSSIGEFMNFFTKTVAERTNPGQRQDVEQSNYVFHVYNRSDGLCGVIASDKEYPLRVAYTLLNKILDEFLTKNPRTKWESGAVTLSFPELDTYLSKYQDPKQADTIMRVQQELDETKDVLHKTIESVLARGEKLDDLIQRSDNLSTQSRMFYKSAKKQNSCCIIA.

The Longin domain occupies 7–126 (SILRFDPKPV…LSFPELDTYL (120 aa)). The 61-residue stretch at 137 to 197 (TIMRVQQELD…KKQNSCCIIA (61 aa)) folds into the v-SNARE coiled-coil homology domain. C193 is lipidated: S-palmitoyl cysteine. A Cysteine methyl ester modification is found at C194. C194 carries S-farnesyl cysteine lipidation. The propeptide at 195–197 (IIA) is removed in mature form.

This sequence belongs to the synaptobrevin family.

The protein localises to the cell membrane. The protein is Synaptobrevin homolog ykt6 (ykt6) of Schizosaccharomyces pombe (strain 972 / ATCC 24843) (Fission yeast).